Here is a 303-residue protein sequence, read N- to C-terminus: Protoheme IX farnesyltransferase 2 (303 aa).

Transmembrane regions (helical) follow at residues Val29–Val49, Leu51–Phe71, Ile96–Thr118, Leu123–Leu143, Asn150–Thr170, Ala177–Ile197, Cys223–Met243, Cys244–Trp264, and Phe281–Val301.

It belongs to the UbiA prenyltransferase family. Protoheme IX farnesyltransferase subfamily.

Its subcellular location is the cell inner membrane. It catalyses the reaction heme b + (2E,6E)-farnesyl diphosphate + H2O = Fe(II)-heme o + diphosphate. The protein operates within porphyrin-containing compound metabolism; heme O biosynthesis; heme O from protoheme: step 1/1. In terms of biological role, converts heme B (protoheme IX) to heme O by substitution of the vinyl group on carbon 2 of heme B porphyrin ring with a hydroxyethyl farnesyl side group. This Shewanella frigidimarina (strain NCIMB 400) protein is Protoheme IX farnesyltransferase 2.